The sequence spans 439 residues: Cell division protein DivIB (439 aa).

Disordered regions lie at residues 1 to 96 and 119 to 149; these read MDDK…DSNI and DNEQ…KSKV. The Cytoplasmic segment spans residues 1 to 173; the sequence is MDDKTKNDQQ…RRKRQKRIQY (173 aa). Acidic residues predominate over residues 11 to 20; it reads ESNEDKDELE. Residues 26-38 are compositionally biased toward basic residues; that stretch reads TSKKRRQRKRSKA. A compositionally biased stretch (basic and acidic residues) spans 64-76; sequence KDFKKEESNDKNN. Over residues 77 to 86 the composition is skewed to low complexity; the sequence is DSASSHANDN. The span at 87–96 shows a compositional bias: acidic residues; the sequence is NIDDSTDSNI. The span at 119-133 shows a compositional bias: polar residues; it reads DNEQPQSAPKEQNSD. Residues 174–194 form a helical membrane-spanning segment; sequence SVITILVLLIAVILIYMFSPL. Residues 195 to 263 form the POTRA domain; that stretch reads SKIAHVNING…NTLNVDITEN (69 aa). The Extracellular portion of the chain corresponds to 195–439; it reads SKIAHVNING…KINKQSSKNN (245 aa). Residues 396–439 are disordered; that stretch reads YRGNTSSQSESDKNVTKSSQEENQAKEELQSVLNKINKQSSKNN. Basic and acidic residues predominate over residues 405–424; the sequence is ESDKNVTKSSQEENQAKEEL. Over residues 426–439 the composition is skewed to polar residues; sequence SVLNKINKQSSKNN.

Belongs to the FtsQ/DivIB family. DivIB subfamily.

The protein localises to the cell membrane. Its function is as follows. Cell division protein that may be involved in stabilizing or promoting the assembly of the division complex. The polypeptide is Cell division protein DivIB (Staphylococcus aureus (strain NCTC 8325 / PS 47)).